A 564-amino-acid chain; its full sequence is Threonine--tRNA ligase (564 aa).

A catalytic region spans residues 167 to 464 (DHRAIGKRLE…LLEKTHGNLP (298 aa)). Residues cysteine 260, histidine 311, and histidine 441 each coordinate Zn(2+).

This sequence belongs to the class-II aminoacyl-tRNA synthetase family. In terms of assembly, homodimer. The cofactor is Zn(2+).

It is found in the cytoplasm. The enzyme catalyses tRNA(Thr) + L-threonine + ATP = L-threonyl-tRNA(Thr) + AMP + diphosphate + H(+). In terms of biological role, catalyzes the attachment of threonine to tRNA(Thr) in a two-step reaction: L-threonine is first activated by ATP to form Thr-AMP and then transferred to the acceptor end of tRNA(Thr). Also edits incorrectly charged L-seryl-tRNA(Thr). This is Threonine--tRNA ligase from Mycoplasma pneumoniae (strain ATCC 29342 / M129 / Subtype 1) (Mycoplasmoides pneumoniae).